The sequence spans 333 residues: Fatty acid hydroxylase domain-containing protein 2 (333 aa).

The next 6 helical transmembrane spans lie at 29–49 (FILGSGLLSFVAFWNSVTWHL), 77–97 (ILFFIGAIQVPCLFFWSFNGL), 134–154 (TVLFNQCMISFPMVVFLYPFL), 168–188 (FHWFLLELAIFTLIEEVLFYY), 215–235 (VISLYAHPIEHAVSNMLPVIV), and 237–257 (PLVMGSHLSSITMWFSLALII). Residues 176–299 (AIFTLIEEVL…LGVLDHLHGT (124 aa)) enclose the Fatty acid hydroxylase domain.

It belongs to the sterol desaturase family. In terms of tissue distribution, down-regulated in primary acute myeloid leukemia (AML) patients.

It is found in the cytoplasm. It localises to the membrane. Promotes megakaryocyte differentiation by enhancing ERK phosphorylation and up-regulating RUNX1 expression. The polypeptide is Fatty acid hydroxylase domain-containing protein 2 (FAXDC2) (Homo sapiens (Human)).